The primary structure comprises 333 residues: Extracellular globin (333 aa).

The N-terminal stretch at 1–18 (MHSSIVLAIVLFVAIASA) is a signal peptide. 2 consecutive Globin domains span residues 25–167 (CMKS…HHGR) and 174–318 (CMNS…KHAK). Gln-82 and His-114 together coordinate heme b. Asn-216 carries N-linked (GlcNAc...) asparagine glycosylation. The heme b site is built by Gln-231 and His-263. The segment at 314-333 (DKHAKAEKDHHEGEHKEEHH) is disordered.

The protein belongs to the globin family. In terms of assembly, homooctamer.

The protein localises to the secreted. It localises to the extracellular space. This is Extracellular globin from Pseudoterranova decipiens (Sealworm).